A 341-amino-acid polypeptide reads, in one-letter code: S-adenosylmethionine:tRNA ribosyltransferase-isomerase (341 aa).

This sequence belongs to the QueA family. In terms of assembly, monomer.

The protein resides in the cytoplasm. It carries out the reaction 7-aminomethyl-7-carbaguanosine(34) in tRNA + S-adenosyl-L-methionine = epoxyqueuosine(34) in tRNA + adenine + L-methionine + 2 H(+). It participates in tRNA modification; tRNA-queuosine biosynthesis. Transfers and isomerizes the ribose moiety from AdoMet to the 7-aminomethyl group of 7-deazaguanine (preQ1-tRNA) to give epoxyqueuosine (oQ-tRNA). This chain is S-adenosylmethionine:tRNA ribosyltransferase-isomerase, found in Trichlorobacter lovleyi (strain ATCC BAA-1151 / DSM 17278 / SZ) (Geobacter lovleyi).